A 443-amino-acid chain; its full sequence is Threonine/serine transporter TdcC (443 aa).

A run of 11 helical transmembrane segments spans residues 22–42 (TTWT…FFPI), 44–64 (AGFG…PIAF), 97–117 (GVVI…IYGV), 140–160 (FVAL…KDLM), 163–183 (VMSY…LSLI), 207–227 (ILVT…FSPI), 259–279 (ASML…FTLS), 319–339 (ASII…LGTL), 366–386 (ISMI…PNIL), 389–409 (IEAM…MYAI), and 423–443 (DNVF…YKLF).

The protein belongs to the amino acid/polyamine transporter 2 family. SdaC/TdcC subfamily.

Its subcellular location is the cell inner membrane. It catalyses the reaction L-threonine(in) + H(+)(in) = L-threonine(out) + H(+)(out). It carries out the reaction L-serine(in) + H(+)(in) = L-serine(out) + H(+)(out). Its function is as follows. Involved in the import of threonine and serine into the cell, with the concomitant import of a proton (symport system). The protein is Threonine/serine transporter TdcC of Salmonella paratyphi B (strain ATCC BAA-1250 / SPB7).